The chain runs to 333 residues: MENNNKNYSHYLHSGYAHPITRSWQGDKVILKSQLIYPIFVTDLINTKTEIKSLPGQYQISSDLVVEFLRPLVEKGLKSIILFGVIISGVKDEQASSADKRESSPVIKSIELIKNEFPEILICTDLCLCAYTDHGHCGVLTEEGFIENEKSIIRLGEIALSFAKAGAHVIAPSDMMDCRVGQIKKVLFQNGYGGRVAVMAYSSKFASSYYGPFRDAAGSGAKHGDRQAYQLPIASRGLGLRAALRDEAEGADFIMVKPAGPYMDIIREVKDHVKVPVCCYQVSGEYAMIYHASVAGGIDLKSGVMESLISLQRSGCDIFITYFTPQLLDWLKL.

The Zn(2+) site is built by Cys-127, Cys-129, and Cys-137. The Schiff-base intermediate with substrate role is filled by Lys-204. Residues Arg-214 and Arg-226 each contribute to the 5-aminolevulinate site. The active-site Schiff-base intermediate with substrate is the Lys-257. 5-aminolevulinate-binding residues include Ser-283 and Tyr-322.

Belongs to the ALAD family. As to quaternary structure, homooctamer. Zn(2+) is required as a cofactor.

The catalysed reaction is 2 5-aminolevulinate = porphobilinogen + 2 H2O + H(+). The protein operates within porphyrin-containing compound metabolism; protoporphyrin-IX biosynthesis; coproporphyrinogen-III from 5-aminolevulinate: step 1/4. Catalyzes an early step in the biosynthesis of tetrapyrroles. Binds two molecules of 5-aminolevulinate per subunit, each at a distinct site, and catalyzes their condensation to form porphobilinogen. The protein is Delta-aminolevulinic acid dehydratase (alad) of Dictyostelium discoideum (Social amoeba).